The primary structure comprises 215 residues: Cytochrome b6 (215 aa).

Residues 32 to 52 (IFYCLGGITLTCFLVQVATGF) form a helical membrane-spanning segment. Position 35 (cysteine 35) interacts with heme c. Positions 86 and 100 each coordinate heme b. 3 helical membrane-spanning segments follow: residues 90–110 (ASMMVLMMILHVFRVYLTGGF), 116–136 (LTWITGVILAVLTVSFGVTGY), and 186–206 (LHTFVLPLLTAVFMLMHFLMI). The heme b site is built by histidine 187 and histidine 202.

The protein belongs to the cytochrome b family. PetB subfamily. As to quaternary structure, the 4 large subunits of the cytochrome b6-f complex are cytochrome b6, subunit IV (17 kDa polypeptide, PetD), cytochrome f and the Rieske protein, while the 4 small subunits are PetG, PetL, PetM and PetN. The complex functions as a dimer. The cofactor is heme b. It depends on heme c as a cofactor.

It is found in the plastid. The protein resides in the chloroplast thylakoid membrane. Its function is as follows. Component of the cytochrome b6-f complex, which mediates electron transfer between photosystem II (PSII) and photosystem I (PSI), cyclic electron flow around PSI, and state transitions. The protein is Cytochrome b6 of Psilotum nudum (Whisk fern).